The chain runs to 377 residues: MATNNNNNNGNPILRSLETSCCFLATLFPKVFCTLVLTWSLYVLLFIIPNYIKSSLNSTILNIIGITLYVLCIISYYKIILIGPGSPLDYPELRINDLNRMINENPYNNNNNDEEPGDLPPESMIIHTMKVNGNQGYRYCTKCSVWKPDRSHHCSSSGKCILKMDHYCPWFSTCIGFHNYKFFIQFLSYVAIYCWFLFIISGKILYNFITEGLFEDEILSLNLVAVLILSFAFAIAVSVFAMFSIYLCCKNLTTIEFQEKRWNYRGQANDERFNYEFDNNGKRKKINTNIFDLGIMENWKSVMGPNWITWILPITVTVTANTKSMISQDEFNNGVNFKVNEEIYAKYLHNAELQQQLNQQLSSYKDRLRRERQANIV.

The Cytoplasmic segment spans residues 1–31 (MATNNNNNNGNPILRSLETSCCFLATLFPKV). The helical transmembrane segment at 32–52 (FCTLVLTWSLYVLLFIIPNYI) threads the bilayer. Residues 53–62 (KSSLNSTILN) are Lumenal-facing. A helical membrane pass occupies residues 63 to 83 (IIGITLYVLCIISYYKIILIG). Residues 84 to 181 (PGSPLDYPEL…STCIGFHNYK (98 aa)) lie on the Cytoplasmic side of the membrane. A DHHC domain is found at 138–188 (RYCTKCSVWKPDRSHHCSSSGKCILKMDHYCPWFSTCIGFHNYKFFIQFLS). C168 (S-palmitoyl cysteine intermediate) is an active-site residue. Residues 182 to 202 (FFIQFLSYVAIYCWFLFIISG) form a helical membrane-spanning segment. Over 203–222 (KILYNFITEGLFEDEILSLN) the chain is Lumenal. The helical transmembrane segment at 223–243 (LVAVLILSFAFAIAVSVFAMF) threads the bilayer. The Cytoplasmic portion of the chain corresponds to 244-377 (SIYLCCKNLT…LRRERQANIV (134 aa)).

The protein belongs to the DHHC palmitoyltransferase family. PFA3 subfamily. In terms of processing, autopalmitoylated.

Its subcellular location is the vacuole membrane. It carries out the reaction L-cysteinyl-[protein] + hexadecanoyl-CoA = S-hexadecanoyl-L-cysteinyl-[protein] + CoA. Palmitoyltransferase specific for VAC8. Palmitoylates VAC8 at one or more of its N-terminal cysteine residues, which is required for its proper membrane localization. The polypeptide is Palmitoyltransferase PFA3 (PFA3) (Candida albicans (strain SC5314 / ATCC MYA-2876) (Yeast)).